The following is a 760-amino-acid chain: BMP/retinoic acid-inducible neural-specific protein 1 (760 aa).

The first 16 residues, 1-16 (MNWRFVELLYFLFVWG), serve as a signal peptide directing secretion. An MACPF domain is found at 68–251 (RYKIYREFAR…FVQSALSYIM (184 aa)). 7 N-linked (GlcNAc...) asparagine glycosylation sites follow: N156, N433, N443, N553, N599, N630, and N676.

It belongs to the BRINP family.

It localises to the cytoplasm. Functionally, plays a role in neurogenesis and brain development. May suppress cell cycle progression in postmitotic neurons by inhibiting G1/S transition. This is BMP/retinoic acid-inducible neural-specific protein 1 (Brinp1) from Rattus norvegicus (Rat).